The chain runs to 503 residues: Glycosyltransferase family 92 protein ZK381.2 (503 aa).

Residues 7–27 traverse the membrane as a helical segment; it reads YKPCLLIILIFNSVILLFILI. The 286-residue stretch at 156 to 441 folds into the GT92 domain; the sequence is KPVIICISPQ…FKCYFDSFYK (286 aa).

The protein belongs to the glycosyltransferase 92 family.

It localises to the membrane. The protein is Glycosyltransferase family 92 protein ZK381.2 of Caenorhabditis elegans.